The primary structure comprises 436 residues: Hydroxycinnamoyltransferase (436 aa).

Active-site proton acceptor residues include H154 and D383.

Belongs to the plant acyltransferase family. As to expression, mostly expressed in stems, and, to a lower extent, in bulbs.

It participates in phenylpropanoid metabolism. Its function is as follows. Hydroxycinnamoyl transferase that catalyzes the transfer of an acyl from p-coumaryol-CoA to various acyl acceptors. Can use feruloyl-CoA and caffeoyl-CoA as acyl donors. The polypeptide is Hydroxycinnamoyltransferase (Narcissus pseudonarcissus (Daffodil)).